Here is a 348-residue protein sequence, read N- to C-terminus: Calcium-gated potassium channel TvoK (348 aa).

The next 3 membrane-spanning stretches (helical) occupy residues 19–39, 52–72, and 80–100; these read LTKV…LEFL, YFTA…GDVV, and VVAM…TATI. The RCK N-terminal domain maps to 120–246; the sequence is KNHTIICNWN…VSAGATEVLS (127 aa). The 83-residue stretch at 266–348 folds into the RCK C-terminal domain; the sequence is DFILKSLSET…KKEVEEAIKG (83 aa).

As to quaternary structure, heterooctamer composed of four full-length subunits and four soluble RCK domains.

Its subcellular location is the cell membrane. In terms of biological role, calcium-gated potassium channel. Can also be activated by Mg(2+), Mn(2+) and Ni(2+). This is Calcium-gated potassium channel TvoK from Thermoplasma volcanium (strain ATCC 51530 / DSM 4299 / JCM 9571 / NBRC 15438 / GSS1).